The primary structure comprises 393 residues: Pre-mRNA splicing factor SR-like 1 (393 aa).

Residues 173–393 (MNLPTKPSGS…VIKLGGSSWR (221 aa)) form a disordered region. The segment covering 249-312 (QSRDYYSDRD…RNDYEDDRSR (64 aa)) has biased composition (basic and acidic residues). A Nuclear localization signal motif is present at residues 301-308 (SRRNDYED). Residues 313 to 325 (HDRRSRSRSRSRS) are compositionally biased toward basic residues. 2 stretches are compositionally biased toward basic and acidic residues: residues 329-346 (QIEREPTPKRDSSNKEKS) and 356-385 (KLKDLYGDASSQKRDEGFGTRKDSSSEEVI).

This sequence belongs to the PRP38 family. Phosphorylated. In terms of tissue distribution, mostly expressed in siliques and leaves, also present in seedlings, flowers and stems, and, at low levels, in roots.

Its subcellular location is the nucleus. May be required for pre-mRNA splicing. Confers salt tolerance to LiCl and NaCl. The protein is Pre-mRNA splicing factor SR-like 1 of Arabidopsis thaliana (Mouse-ear cress).